The chain runs to 214 residues: Ribosomal RNA small subunit methyltransferase G (214 aa).

Residues Gly-77, Phe-82, 128-129, and Arg-143 contribute to the S-adenosyl-L-methionine site; that span reads VE.

This sequence belongs to the methyltransferase superfamily. RNA methyltransferase RsmG family.

The protein localises to the cytoplasm. It carries out the reaction guanosine(527) in 16S rRNA + S-adenosyl-L-methionine = N(7)-methylguanosine(527) in 16S rRNA + S-adenosyl-L-homocysteine. In terms of biological role, specifically methylates the N7 position of guanine in position 527 of 16S rRNA. This Nitrosomonas europaea (strain ATCC 19718 / CIP 103999 / KCTC 2705 / NBRC 14298) protein is Ribosomal RNA small subunit methyltransferase G.